Consider the following 92-residue polypeptide: Small integral membrane protein 12 (92 aa).

Residues 15 to 34 form a helical membrane-spanning segment; that stretch reads YVTFPVAFVVGAVGYHLEWF.

It belongs to the SMIM12 family.

It is found in the membrane. The sequence is that of Small integral membrane protein 12 (Smim12) from Rattus norvegicus (Rat).